We begin with the raw amino-acid sequence, 538 residues long: Cytochrome P450 monooxygenase xanG (538 aa).

The helical transmembrane segment at 44–64 (MILYYLASIPLAIICYLAWYL) threads the bilayer. Asn378 carries N-linked (GlcNAc...) asparagine glycosylation. Cys489 provides a ligand contact to heme.

The protein belongs to the cytochrome P450 family. It depends on heme as a cofactor.

The protein resides in the membrane. It participates in secondary metabolite biosynthesis. In terms of biological role, cytochrome P450 monooxygenase; part of the gene cluster that mediates the biosynthesis of the isocyanide xanthocillin and its derivatives. The first step of the pathway consists in the conversion of tyrosine into a vinyl-isonitrile intermediate by the isocyanide synthase xanB. Subsequent oxidative dimerization of this intermediate to form xanthocillin may involve the cytochrome P450 monooxygenase xanG, whose expression is coregulated with that of XanB. Xanthocillin can be further modified by the isonitrile hydratase-like protein xanA which introduces N-formyl groups and the methyltransferase xanE which introduces methyl groups, leading to the production of several derivatives including fumiformamide. Finally, fumiformamide can be subject to both oxidative and reductive cyclization to yield melanocins E and F, respectively. The chain is Cytochrome P450 monooxygenase xanG from Aspergillus fumigatus (strain ATCC MYA-4609 / CBS 101355 / FGSC A1100 / Af293) (Neosartorya fumigata).